A 209-amino-acid chain; its full sequence is Kynurenine formamidase (209 aa).

Tryptophan 20 serves as a coordination point for substrate. Residues histidine 50, histidine 54, and aspartate 56 each coordinate Zn(2+). The active-site Proton donor/acceptor is the histidine 60. Histidine 161 and glutamate 173 together coordinate Zn(2+).

This sequence belongs to the Cyclase 1 superfamily. KynB family. In terms of assembly, homodimer. It depends on Zn(2+) as a cofactor.

The enzyme catalyses N-formyl-L-kynurenine + H2O = L-kynurenine + formate + H(+). Its pathway is amino-acid degradation; L-tryptophan degradation via kynurenine pathway; L-kynurenine from L-tryptophan: step 2/2. Catalyzes the hydrolysis of N-formyl-L-kynurenine to L-kynurenine, the second step in the kynurenine pathway of tryptophan degradation. The polypeptide is Kynurenine formamidase (Bacillus anthracis).